Consider the following 401-residue polypeptide: Nicotinate phosphoribosyltransferase (401 aa).

The residue at position 221 (histidine 221) is a Phosphohistidine; by autocatalysis.

It belongs to the NAPRTase family. Transiently phosphorylated on a His residue during the reaction cycle. Phosphorylation strongly increases the affinity for substrates and increases the rate of nicotinate D-ribonucleotide production. Dephosphorylation regenerates the low-affinity form of the enzyme, leading to product release.

The enzyme catalyses nicotinate + 5-phospho-alpha-D-ribose 1-diphosphate + ATP + H2O = nicotinate beta-D-ribonucleotide + ADP + phosphate + diphosphate. Its pathway is cofactor biosynthesis; NAD(+) biosynthesis; nicotinate D-ribonucleotide from nicotinate: step 1/1. In terms of biological role, catalyzes the synthesis of beta-nicotinate D-ribonucleotide from nicotinate and 5-phospho-D-ribose 1-phosphate at the expense of ATP. This chain is Nicotinate phosphoribosyltransferase, found in Yersinia pseudotuberculosis serotype O:1b (strain IP 31758).